The following is a 650-amino-acid chain: Putative pumilio homolog 7, chloroplastic (650 aa).

Disordered regions lie at residues methionine 1–leucine 22 and asparagine 200–isoleucine 235. The N-terminal 77 residues, methionine 1–lysine 77, are a transit peptide targeting the chloroplast. Composition is skewed to low complexity over residues serine 8–leucine 22 and proline 217–glycine 232. Residues serine 308–lysine 650 enclose the PUM-HD domain. Pumilio repeat units lie at residues aspartate 333–asparagine 368, glutamate 369–leucine 404, glutamate 408–lysine 443, alanine 445–aspartate 480, alanine 481–alanine 516, glutamate 517–alanine 552, glutamine 553–serine 591, and histidine 594–glutamate 625.

The protein resides in the plastid. It is found in the chloroplast. Its subcellular location is the cytoplasm. Functionally, sequence-specific RNA-binding protein that regulates translation and mRNA stability by binding the 3'-UTR of target mRNAs. This chain is Putative pumilio homolog 7, chloroplastic (APUM7), found in Arabidopsis thaliana (Mouse-ear cress).